We begin with the raw amino-acid sequence, 67 residues long: Potassium channel toxin alpha-KTx 6.16 (67 aa).

The N-terminal stretch at 1 to 24 (MNLKLALVLLLTVINVGMLPGATS) is a signal peptide. 4 cysteine pairs are disulfide-bonded: Cys-34–Cys-55, Cys-40–Cys-60, Cys-44–Cys-62, and Cys-50–Cys-65.

It belongs to the short scorpion toxin superfamily. Potassium channel inhibitor family. Alpha-KTx 06 subfamily. As to expression, expressed by the venom gland.

Its subcellular location is the secreted. In terms of biological role, inhibits voltage-gated potassium channels. In Opisthacanthus cayaporum (South American scorpion), this protein is Potassium channel toxin alpha-KTx 6.16.